Here is a 599-residue protein sequence, read N- to C-terminus: Stromal 70 kDa heat shock-related protein, chloroplastic (599 aa).

The tract at residues 545–573 is disordered; the sequence is NQPGAGGEPGAAQAQHQEQSSARQIQRAK. Residues 554-568 are compositionally biased toward low complexity; sequence GAAQAQHQEQSSARQ.

Belongs to the heat shock protein 70 family.

Its subcellular location is the plastid. The protein localises to the chloroplast stroma. Interacts with newly imported chloroplast proteins to assist in their maturation. This Spinacia oleracea (Spinach) protein is Stromal 70 kDa heat shock-related protein, chloroplastic (CHSP70).